The chain runs to 463 residues: Cysteine--tRNA ligase (463 aa).

Cysteine 29 lines the Zn(2+) pocket. The short motif at 31 to 41 (MTIYDLCHIGH) is the 'HIGH' region element. Cysteine 218, histidine 243, and glutamate 247 together coordinate Zn(2+). A 'KMSKS' region motif is present at residues 275–279 (KMSKS). Lysine 278 is a binding site for ATP.

Belongs to the class-I aminoacyl-tRNA synthetase family. As to quaternary structure, monomer. It depends on Zn(2+) as a cofactor.

Its subcellular location is the cytoplasm. It carries out the reaction tRNA(Cys) + L-cysteine + ATP = L-cysteinyl-tRNA(Cys) + AMP + diphosphate. The sequence is that of Cysteine--tRNA ligase from Polaromonas naphthalenivorans (strain CJ2).